Consider the following 382-residue polypeptide: Transcription termination/antitermination protein NusA (382 aa).

An S1 motif domain is found at E135–T199. The 67-residue stretch at E301–D367 folds into the KH domain. Positions L348–E382 are disordered.

The protein belongs to the NusA family. In terms of assembly, monomer. Binds directly to the core enzyme of the DNA-dependent RNA polymerase and to nascent RNA.

It localises to the cytoplasm. In terms of biological role, participates in both transcription termination and antitermination. The protein is Transcription termination/antitermination protein NusA of Halalkalibacterium halodurans (strain ATCC BAA-125 / DSM 18197 / FERM 7344 / JCM 9153 / C-125) (Bacillus halodurans).